The primary structure comprises 349 residues: Anthranilate phosphoribosyltransferase (349 aa).

5-phospho-alpha-D-ribose 1-diphosphate is bound by residues Gly-82, 85 to 86 (GD), 92 to 95 (NVST), 110 to 118 (KHGNRAVSG), and Ser-122. Anthranilate is bound at residue Gly-82. Position 94 (Ser-94) interacts with Mg(2+). Asn-113 provides a ligand contact to anthranilate. Anthranilate is bound at residue Arg-168. Residues Asp-227 and Glu-228 each coordinate Mg(2+).

This sequence belongs to the anthranilate phosphoribosyltransferase family. In terms of assembly, homodimer. It depends on Mg(2+) as a cofactor.

It catalyses the reaction N-(5-phospho-beta-D-ribosyl)anthranilate + diphosphate = 5-phospho-alpha-D-ribose 1-diphosphate + anthranilate. The protein operates within amino-acid biosynthesis; L-tryptophan biosynthesis; L-tryptophan from chorismate: step 2/5. In terms of biological role, catalyzes the transfer of the phosphoribosyl group of 5-phosphorylribose-1-pyrophosphate (PRPP) to anthranilate to yield N-(5'-phosphoribosyl)-anthranilate (PRA). This Pseudomonas entomophila (strain L48) protein is Anthranilate phosphoribosyltransferase.